A 121-amino-acid chain; its full sequence is uncharacterized protein (121 aa).

Disordered stretches follow at residues 24–43 (SGRT…GRGG) and 100–121 (DHEN…TDQR).

This is an uncharacterized protein from Homo sapiens (Human).